The following is a 592-amino-acid chain: 3-hydroxy-3-methylglutaryl-coenzyme A reductase 1 (592 aa).

Residues 1-45 are disordered; sequence MDLRRRPPKPPVTNNNNSNGSFRSYQPRTSDDDHRRRATTIAPPP. The segment covering 12 to 28 has biased composition (polar residues); sequence VTNNNNSNGSFRSYQPR. Residues Asn-16 and Asn-19 are each glycosylated (N-linked (GlcNAc...) asparagine). The next 2 helical transmembrane spans lie at 47-69 and 97-117; these read ASDA…FFSV and AIIA…IDFV. Residues 118 to 171 form a linker region; the sequence is QSFISRASGDAWDLADTIDDDDHRLVTCSPPTPIVSVAKLPNPEPIVTESLPEE. A catalytic region spans residues 172–592; sequence DEEIVKSVID…GATTTTTTTT (421 aa). Glu-265 acts as the Charge relay system in catalysis. Asn-329 carries N-linked (GlcNAc...) asparagine glycosylation. Active-site charge relay system residues include Lys-397 and Asp-473. Residue His-571 is the Proton donor of the active site. The N-linked (GlcNAc...) asparagine glycan is linked to Asn-575. The residue at position 577 (Ser-577) is a Phosphoserine.

It belongs to the HMG-CoA reductase family. Interacts (via N-terminus) with B''ALPHA and B''BETA. Inactivated by phosphorylation at Ser-577 by KIN10 activated form. Probably also phosphorylated at additional sites. As to expression, found in all tissues. Isoform Short is expressed at low levels specifically in flowers. Expressed in both the tapetum and microspores.

The protein resides in the endoplasmic reticulum membrane. The enzyme catalyses (R)-mevalonate + 2 NADP(+) + CoA = (3S)-3-hydroxy-3-methylglutaryl-CoA + 2 NADPH + 2 H(+). It functions in the pathway metabolic intermediate biosynthesis; (R)-mevalonate biosynthesis; (R)-mevalonate from acetyl-CoA: step 3/3. With respect to regulation, regulated at the post-translational level in response to alterations of sphingolipid and sterol biosynthetic pathways. Negatively regulated by a PP2A-dependent dephosphorylation occurring at a site different than Ser-577. Completely inhibited by mevinolin (IC(50) = 12.5 nM). Reversibly inactivated by phosphorylation at Ser-577 by spinach or Brassica oleracea HMGR kinases in a cell-free system. Down-regulated by KIN10 through its phosphorylation at Ser-577. Functionally, catalyzes the synthesis of mevalonate, the specific precursor of all isoprenoid compounds present in plants. The polypeptide is 3-hydroxy-3-methylglutaryl-coenzyme A reductase 1 (Arabidopsis thaliana (Mouse-ear cress)).